A 242-amino-acid polypeptide reads, in one-letter code: Uridylate kinase (242 aa).

17-20 (KLGG) is an ATP binding site. G58 serves as a coordination point for UMP. Residues G59 and R63 each contribute to the ATP site. Residues D78 and 139 to 146 (MGMPYFST) contribute to the UMP site. ATP-binding residues include F172 and D175.

It belongs to the UMP kinase family. As to quaternary structure, homohexamer.

Its subcellular location is the cytoplasm. It carries out the reaction UMP + ATP = UDP + ADP. It functions in the pathway pyrimidine metabolism; CTP biosynthesis via de novo pathway; UDP from UMP (UMPK route): step 1/1. With respect to regulation, inhibited by UTP. Its function is as follows. Catalyzes the reversible phosphorylation of UMP to UDP. This chain is Uridylate kinase, found in Rhodococcus jostii (strain RHA1).